The chain runs to 428 residues: Enolase (428 aa).

Glutamine 163 is a (2R)-2-phosphoglycerate binding site. Glutamate 205 serves as the catalytic Proton donor. The Mg(2+) site is built by aspartate 242, glutamate 286, and aspartate 313. (2R)-2-phosphoglycerate contacts are provided by lysine 338, arginine 367, serine 368, and lysine 389. The active-site Proton acceptor is lysine 338.

It belongs to the enolase family. Requires Mg(2+) as cofactor.

The protein resides in the cytoplasm. It localises to the secreted. Its subcellular location is the cell surface. The enzyme catalyses (2R)-2-phosphoglycerate = phosphoenolpyruvate + H2O. It functions in the pathway carbohydrate degradation; glycolysis; pyruvate from D-glyceraldehyde 3-phosphate: step 4/5. Catalyzes the reversible conversion of 2-phosphoglycerate (2-PG) into phosphoenolpyruvate (PEP). It is essential for the degradation of carbohydrates via glycolysis. This is Enolase from Bordetella petrii (strain ATCC BAA-461 / DSM 12804 / CCUG 43448).